The primary structure comprises 1227 residues: ATP-dependent helicase/nuclease subunit A (1227 aa).

In terms of domain architecture, UvrD-like helicase ATP-binding spans 3 to 477 (VKYTPDQARA…IIFAENFRSS (475 aa)). Residue 24–31 (ASAGSGKT) participates in ATP binding. The UvrD-like helicase C-terminal domain maps to 505-788 (GQLKFAAGYD…KLMTIHASKG (284 aa)).

Belongs to the helicase family. AddA subfamily. In terms of assembly, heterodimer of AddA and AddB/RexB. It depends on Mg(2+) as a cofactor.

It carries out the reaction Couples ATP hydrolysis with the unwinding of duplex DNA by translocating in the 3'-5' direction.. The enzyme catalyses ATP + H2O = ADP + phosphate + H(+). The heterodimer acts as both an ATP-dependent DNA helicase and an ATP-dependent, dual-direction single-stranded exonuclease. Recognizes the chi site generating a DNA molecule suitable for the initiation of homologous recombination. The AddA nuclease domain is required for chi fragment generation; this subunit has the helicase and 3' -&gt; 5' nuclease activities. The sequence is that of ATP-dependent helicase/nuclease subunit A from Lactobacillus delbrueckii subsp. bulgaricus (strain ATCC 11842 / DSM 20081 / BCRC 10696 / JCM 1002 / NBRC 13953 / NCIMB 11778 / NCTC 12712 / WDCM 00102 / Lb 14).